Consider the following 512-residue polypeptide: uncharacterized protein (512 aa).

This is an uncharacterized protein from Methanocaldococcus jannaschii (strain ATCC 43067 / DSM 2661 / JAL-1 / JCM 10045 / NBRC 100440) (Methanococcus jannaschii).